Reading from the N-terminus, the 437-residue chain is Putative ABC transporter ATP-binding protein CTC_00753 (437 aa).

ABC transporter domains follow at residues 1–143 (MERE…LPTI) and 179–416 (LKFK…QISK). Residue 219 to 226 (GENGAGKS) coordinates ATP.

This sequence belongs to the ABC transporter superfamily.

It is found in the cell membrane. Functionally, probably part of an ABC transporter complex. Responsible for energy coupling to the transport system. This chain is Putative ABC transporter ATP-binding protein CTC_00753, found in Clostridium tetani (strain Massachusetts / E88).